The sequence spans 364 residues: UDP-N-acetylglucosamine--N-acetylmuramyl-(pentapeptide) pyrophosphoryl-undecaprenol N-acetylglucosamine transferase (364 aa).

Residues threonine 13–glycine 15, asparagine 125, arginine 165, serine 192, and glutamine 293 contribute to the UDP-N-acetyl-alpha-D-glucosamine site.

Belongs to the glycosyltransferase 28 family. MurG subfamily.

Its subcellular location is the cell inner membrane. The enzyme catalyses di-trans,octa-cis-undecaprenyl diphospho-N-acetyl-alpha-D-muramoyl-L-alanyl-D-glutamyl-meso-2,6-diaminopimeloyl-D-alanyl-D-alanine + UDP-N-acetyl-alpha-D-glucosamine = di-trans,octa-cis-undecaprenyl diphospho-[N-acetyl-alpha-D-glucosaminyl-(1-&gt;4)]-N-acetyl-alpha-D-muramoyl-L-alanyl-D-glutamyl-meso-2,6-diaminopimeloyl-D-alanyl-D-alanine + UDP + H(+). Its pathway is cell wall biogenesis; peptidoglycan biosynthesis. Its function is as follows. Cell wall formation. Catalyzes the transfer of a GlcNAc subunit on undecaprenyl-pyrophosphoryl-MurNAc-pentapeptide (lipid intermediate I) to form undecaprenyl-pyrophosphoryl-MurNAc-(pentapeptide)GlcNAc (lipid intermediate II). In Cereibacter sphaeroides (strain ATCC 17029 / ATH 2.4.9) (Rhodobacter sphaeroides), this protein is UDP-N-acetylglucosamine--N-acetylmuramyl-(pentapeptide) pyrophosphoryl-undecaprenol N-acetylglucosamine transferase.